The following is a 162-amino-acid chain: MSDKIGLFTGSFDPMTNGHLDIIERASRLFDKLYVGIFFNPHKQGFLPIENRKRGLEKALGHLENVEVVASHDELVVDVAKRLGATFLVRGLRNASDLQYEASFDYYNHQLSSDIETIYLHSRPEHLYISSSGVRELLKFGQDIACYVPESILEEIRNEKKD.

Residue Ser11 participates in substrate binding. ATP contacts are provided by residues 11–12 (SF) and His19. 3 residues coordinate substrate: Lys43, Val76, and Arg90. Residues 91 to 93 (GLR), Glu101, and 126 to 132 (HLYISSS) each bind ATP.

It belongs to the bacterial CoaD family. Homohexamer. Mg(2+) serves as cofactor.

The protein resides in the cytoplasm. The catalysed reaction is (R)-4'-phosphopantetheine + ATP + H(+) = 3'-dephospho-CoA + diphosphate. The protein operates within cofactor biosynthesis; coenzyme A biosynthesis; CoA from (R)-pantothenate: step 4/5. Reversibly transfers an adenylyl group from ATP to 4'-phosphopantetheine, yielding dephospho-CoA (dPCoA) and pyrophosphate. This is Phosphopantetheine adenylyltransferase from Streptococcus pneumoniae (strain Taiwan19F-14).